Reading from the N-terminus, the 579-residue chain is Probable cholinesterase (579 aa).

The signal sequence occupies residues 1 to 19; sequence MTDHKIIMLLLLGIYCIQA. 2 N-linked (GlcNAc...) asparagine; by host glycosylation sites follow: Asn77 and Asn144. Catalysis depends on Ser217, which acts as the Acyl-ester intermediate. Asn257, Asn269, and Asn283 each carry an N-linked (GlcNAc...) asparagine; by host glycan. Catalysis depends on Glu337, which acts as the Charge relay system. Residues Asn373 and Asn394 are each glycosylated (N-linked (GlcNAc...) asparagine; by host). Residue His451 is the Charge relay system of the active site. N-linked (GlcNAc...) asparagine; by host glycosylation is present at Asn469.

This sequence belongs to the type-B carboxylesterase/lipase family.

It catalyses the reaction an acylcholine + H2O = a carboxylate + choline + H(+). Functionally, may be involved in the disruption of the host membrane. This is Probable cholinesterase from Acanthamoeba polyphaga mimivirus (APMV).